The primary structure comprises 143 residues: Nuclear transcription factor Y subunit B-4 (143 aa).

Positions M1–Q23 are disordered. The span at E9–G20 shows a compositional bias: gly residues. The DNA-binding element occupies L27–G33. The segment at V54 to I65 is subunit association domain (SAD). The segment covering K117–V130 has biased composition (basic and acidic residues). Positions K117–M143 are disordered.

It belongs to the NFYB/HAP3 subunit family. As to quaternary structure, heterotrimeric transcription factor composed of three components, NF-YA, NF-YB and NF-YC. NF-YB and NF-YC must interact and dimerize for NF-YA association and DNA binding. In terms of tissue distribution, ubiquitous.

The protein resides in the nucleus. Functionally, component of the NF-Y/HAP transcription factor complex. The NF-Y complex stimulates the transcription of various genes by recognizing and binding to a CCAAT motif in promoters. May regulate the expression of photosynthetic genes, and may be involved in chloroplast and amyloplast development. The chain is Nuclear transcription factor Y subunit B-4 (NFYB4) from Oryza sativa subsp. japonica (Rice).